The sequence spans 250 residues: 1-acyl-sn-glycerol-3-phosphate acyltransferase (250 aa).

The short motif at His-88–Asp-93 is the HXXXXD motif element.

This sequence belongs to the 1-acyl-sn-glycerol-3-phosphate acyltransferase family.

The enzyme catalyses a 1-acyl-sn-glycero-3-phosphate + an acyl-CoA = a 1,2-diacyl-sn-glycero-3-phosphate + CoA. Its pathway is phospholipid metabolism; CDP-diacylglycerol biosynthesis; CDP-diacylglycerol from sn-glycerol 3-phosphate: step 2/3. Its function is as follows. Converts lysophosphatidic acid (LPA) into phosphatidic acid by incorporating acyl moiety at the 2 position. This Borreliella burgdorferi (strain ATCC 35210 / DSM 4680 / CIP 102532 / B31) (Borrelia burgdorferi) protein is 1-acyl-sn-glycerol-3-phosphate acyltransferase (plsC).